A 446-amino-acid chain; its full sequence is Phosphoglucosamine mutase (446 aa).

Residue Ser88 is the Phosphoserine intermediate of the active site. Mg(2+) contacts are provided by Ser88, Asp231, Asp233, and Asp235. Phosphoserine is present on Ser88.

The protein belongs to the phosphohexose mutase family. Mg(2+) is required as a cofactor. Post-translationally, activated by phosphorylation.

It catalyses the reaction alpha-D-glucosamine 1-phosphate = D-glucosamine 6-phosphate. Its function is as follows. Catalyzes the conversion of glucosamine-6-phosphate to glucosamine-1-phosphate. This chain is Phosphoglucosamine mutase, found in Methanococcus vannielii (strain ATCC 35089 / DSM 1224 / JCM 13029 / OCM 148 / SB).